Consider the following 101-residue polypeptide: Small ribosomal subunit protein bS6 (101 aa).

Belongs to the bacterial ribosomal protein bS6 family. In terms of assembly, part of the 30S ribosomal subunit. Forms a tight heterodimer with protein bS18.

Its function is as follows. Located on the outer edge of the platform on the body of the 30S subunit. The polypeptide is Small ribosomal subunit protein bS6 (rpsF) (Thermus thermophilus (strain ATCC BAA-163 / DSM 7039 / HB27)).